A 460-amino-acid chain; its full sequence is MFS-type transporter PUL3 (460 aa).

Transmembrane regions (helical) follow at residues 16–36 (AVTLIAVQFSFDTCVYLSSVV), 50–70 (YLFILQAVSAAVQVFFSFIIG), 81–101 (WVIIFLYFLSFVGNFLYSCAG), 113–133 (IICGAASSSGAVVYSYITAIS), 151–171 (GICMALAQLVAILFALCDFTV), 181–201 (APTFASSFIILLICVLLMFVL), 240–260 (MFLSTFFMCEVLYFMPIFLTL), and 271–291 (VAFMVSAVLGVAGSFFAPDLV). The segment at 300 to 323 (PSTQDETDTSDNDKIEKEESEQKS) is disordered. A compositionally biased stretch (basic and acidic residues) spans 310 to 323 (DNDKIEKEESEQKS). 4 consecutive transmembrane segments (helical) span residues 333 to 353 (VSLTIFALFVALIGQAFMIGA), 369 to 389 (IFFTAGLSITMLGYNFMGSSV), 408 to 428 (FIGAIAGVGKLVAPIVLAALY), and 433 to 453 (GLPIGVGFGMILVGISIPSLV).

It belongs to the major facilitator superfamily. TCR/Tet family.

Its subcellular location is the cell membrane. Functionally, MFS-type transporer required for the uptake of iron via the uptake of the siderophore pulcherrimin-iron complex. The sequence is that of MFS-type transporter PUL3 from Kluyveromyces lactis (strain ATCC 8585 / CBS 2359 / DSM 70799 / NBRC 1267 / NRRL Y-1140 / WM37) (Yeast).